Here is a 272-residue protein sequence, read N- to C-terminus: 3-methyl-2-oxobutanoate hydroxymethyltransferase (272 aa).

Positions 52 and 91 each coordinate Mg(2+). 3-methyl-2-oxobutanoate contacts are provided by residues 52-53 (DS), Asp91, and Lys121. Residue Glu123 participates in Mg(2+) binding. The active-site Proton acceptor is the Glu190.

Belongs to the PanB family. As to quaternary structure, homodecamer; pentamer of dimers. Requires Mg(2+) as cofactor.

It localises to the cytoplasm. The catalysed reaction is 3-methyl-2-oxobutanoate + (6R)-5,10-methylene-5,6,7,8-tetrahydrofolate + H2O = 2-dehydropantoate + (6S)-5,6,7,8-tetrahydrofolate. Its pathway is cofactor biosynthesis; (R)-pantothenate biosynthesis; (R)-pantoate from 3-methyl-2-oxobutanoate: step 1/2. Catalyzes the reversible reaction in which hydroxymethyl group from 5,10-methylenetetrahydrofolate is transferred onto alpha-ketoisovalerate to form ketopantoate. The chain is 3-methyl-2-oxobutanoate hydroxymethyltransferase from Christiangramia forsetii (strain DSM 17595 / CGMCC 1.15422 / KT0803) (Gramella forsetii).